The following is a 67-amino-acid chain: Large ribosomal subunit protein uL29 (67 aa).

It belongs to the universal ribosomal protein uL29 family.

The sequence is that of Large ribosomal subunit protein uL29 from Alkaliphilus metalliredigens (strain QYMF).